Reading from the N-terminus, the 222-residue chain is PLASMODESMATA CALLOSE-BINDING PROTEIN 4 (222 aa).

The first 19 residues, 1-19, serve as a signal peptide directing secretion; sequence MSVLLPLCLIISMFTYSNA. Cysteine 22 and cysteine 83 form a disulfide bridge. Residues 88 to 187 are compositionally biased toward low complexity; it reads AASPSTTPPS…SVFPGTTLGP (100 aa). Residues 88–199 are disordered; the sequence is AASPSTTPPS…SGGLGDPNAG (112 aa). Asparagine 197 is lipidated: GPI-anchor amidated asparagine. A propeptide spans 198 to 222 (removed in mature form); it reads AGEKLSVRTNTVVFLLTGVAAMLVI.

Post-translationally, contains two additional disulfide bonds.

The protein resides in the cell membrane. It localises to the cell junction. It is found in the plasmodesma. The polypeptide is PLASMODESMATA CALLOSE-BINDING PROTEIN 4 (PDCB4) (Arabidopsis thaliana (Mouse-ear cress)).